Reading from the N-terminus, the 198-residue chain is DNA damage response protein D (198 aa).

Residues 124 to 198 (SAAPTDPAGP…SEAGENTPAA (75 aa)) are disordered. Residues 136–180 (PGTDRAERTAAERTASERATHDRASTERPARPRRSAEPEAVRTED) are compositionally biased toward basic and acidic residues.

Its function is as follows. Appears to contribute to D.radiodurans capacity to survive exposure to ionizing radiation. May play a role in DNA repair and genome reconstitution. The chain is DNA damage response protein D (ddrD) from Deinococcus radiodurans (strain ATCC 13939 / DSM 20539 / JCM 16871 / CCUG 27074 / LMG 4051 / NBRC 15346 / NCIMB 9279 / VKM B-1422 / R1).